A 376-amino-acid chain; its full sequence is 28S rRNA (uridine-N(3))-methyltransferase (376 aa).

Disordered regions lie at residues 1–33 (MAER…EEKK) and 49–71 (AQEE…DRGR). The span at 15-33 (HGQRIEWRKWKQQKKEEKK) shows a compositional bias: basic and acidic residues. Residues Thr-289, Arg-292, Gly-312, Asn-341, and Thr-342 each contribute to the S-adenosyl-L-homocysteine site. Positions 292, 312, 341, and 342 each coordinate S-adenosyl-L-methionine.

The protein belongs to the class IV-like SAM-binding methyltransferase superfamily. In terms of assembly, interacts with INCA1.

It is found in the cytoplasm. It localises to the cytoskeleton. Its subcellular location is the spindle. The protein localises to the chromosome. The protein resides in the centromere. It is found in the kinetochore. It localises to the microtubule organizing center. Its subcellular location is the centrosome. The catalysed reaction is uridine in 28S rRNA + S-adenosyl-L-methionine = N(3)-methyluridine in 28S rRNA + S-adenosyl-L-homocysteine + H(+). Its function is as follows. S-adenosyl-L-methionine-dependent methyltransferase that specifically methylates the N3 position of a uridine in 28S rRNA. Required for association of the centrosomes with the poles of the bipolar mitotic spindle during metaphase. Also involved in chromosome alignment. May promote centrosome maturation probably by recruiting A-kinase anchor protein AKAP9 to centrosomes in early mitosis. Binds specifically to miRNA MIR145 hairpin, regulates MIR145 expression at a postranscriptional level. This is 28S rRNA (uridine-N(3))-methyltransferase from Homo sapiens (Human).